A 367-amino-acid polypeptide reads, in one-letter code: tRNA-dihydrouridine(20a/20b) synthase [NAD(P)+] (367 aa).

Residues 45–47 (PMV) and Q99 contribute to the FMN site. Residue C128 is the Proton donor of the active site. Residues K169, H197, 231 to 233 (NGD), and 255 to 256 (VR) contribute to the FMN site.

It belongs to the Dus family. Dus4 subfamily. FMN serves as cofactor.

The enzyme catalyses 5,6-dihydrouridine(20a) in tRNA + NADP(+) = uridine(20a) in tRNA + NADPH + H(+). It catalyses the reaction 5,6-dihydrouridine(20a) in tRNA + NAD(+) = uridine(20a) in tRNA + NADH + H(+). The catalysed reaction is 5,6-dihydrouridine(20b) in tRNA + NAD(+) = uridine(20b) in tRNA + NADH + H(+). It carries out the reaction 5,6-dihydrouridine(20b) in tRNA + NADP(+) = uridine(20b) in tRNA + NADPH + H(+). The enzyme catalyses a 5,6-dihydrouridine in mRNA + NAD(+) = a uridine in mRNA + NADH + H(+). It catalyses the reaction a 5,6-dihydrouridine in mRNA + NADP(+) = a uridine in mRNA + NADPH + H(+). Functionally, catalyzes the synthesis of dihydrouridine, a modified base found in the D-loop of most tRNAs. Specifically modifies U20a and U20b in cytoplasmic tRNAs. Also able to mediate dihydrouridylation of some mRNAs, thereby affecting their translation. The sequence is that of tRNA-dihydrouridine(20a/20b) synthase [NAD(P)+] from Saccharomyces cerevisiae (strain ATCC 204508 / S288c) (Baker's yeast).